The chain runs to 240 residues: Inhibitor of growth protein 5 (240 aa).

A disordered region spans residues 115–165; it reads MDGSDFESTGARSLKKGRSQKEKRSSRGRGRRTSEEDTPKKKKHKSGSEFT. Serine 118 carries the phosphoserine modification. Arginine 126 is subject to Omega-N-methylarginine. The segment at 186–235 adopts a PHD-type zinc-finger fold; it reads PTYCLCHQVSYGEMIGCDNPDCPIEWFHFACVDLTTKPKGKWFCPRCVQE. Zn(2+)-binding residues include cysteine 189, cysteine 191, cysteine 202, cysteine 207, histidine 213, cysteine 216, cysteine 229, and cysteine 232.

Belongs to the ING family. In terms of assembly, component of the HBO1 complex composed of KAT7/HBO1, MEAF6, ING5, and one scaffold subunit: complexes containing BRPF scaffold (BRPF1, BRD1/BRPF2 or BRPF3) direct KAT7/HBO1 specificity towards H3K14ac, while complexes containing JADE scaffold (JADE1, JADE2 and JADE3) mediate acetylation of histone H4. Component of the MOZ/MORF complex composed at least of ING5, KAT6A, KAT6B, MEAF6 and one of BRPF1, BRD1/BRPF2 and BRPF3. Interacts with H3K4me3 and to a lesser extent with H3K4me2. Interacts with EP300 and p53/TP53. Interacts with INCA1.

It is found in the nucleus. It localises to the chromosome. In terms of biological role, component of the HBO1 complex, which specifically mediates acetylation of histone H3 at 'Lys-14' (H3K14ac) and, to a lower extent, acetylation of histone H4. Component of the MOZ/MORF complex which has a histone H3 acetyltransferase activity. Through chromatin acetylation it may regulate DNA replication and may function as a transcriptional coactivator. Inhibits cell growth, induces a delay in S-phase progression and enhances Fas-induced apoptosis in an INCA1-dependent manner. This is Inhibitor of growth protein 5 (Ing5) from Mus musculus (Mouse).